Reading from the N-terminus, the 309-residue chain is Probable sugar phosphate/phosphate translocator At5g05820 (309 aa).

10 helical membrane passes run 9 to 29 (FFTI…LLLN), 42 to 62 (IFLT…AIAW), 77 to 97 (FFKI…GNIS), 100 to 120 (FLPV…TAVF), 130 to 150 (AWLT…ASGG), 154 to 174 (FHLF…LKSV), 192 to 212 (LLLY…LIME), 229 to 249 (IVWY…TNFL), 256 to 278 (ALTL…ILIF), and 282 to 301 (VSVT…ILYS). The region spanning 30 to 147 (KYLLSNYGFK…VPVVTGVVIA (118 aa)) is the EamA domain.

The protein belongs to the TPT transporter family. TPT (TC 2.A.7.9) subfamily.

Its subcellular location is the membrane. This Arabidopsis thaliana (Mouse-ear cress) protein is Probable sugar phosphate/phosphate translocator At5g05820.